An 846-amino-acid polypeptide reads, in one-letter code: Vinculin (846 aa).

The interaction with TLN stretch occupies residues 1 to 257 (MPVKFHTKTL…VLQLTTTFEE (257 aa)). Residues 315-370 (RAKLLAAADELDQILKELEELQAKGLGDSRQARALAHAAAVKLQELEQEIRKALAE) adopt a coiled-coil conformation. The tract at residues 617–646 (WVPPRPPLPELEEEEEPPELPPPPEDPASL) is disordered.

This sequence belongs to the vinculin/alpha-catenin family. As to quaternary structure, monomer. Interacts with TLN (talin); the interaction facilitates VIN1 binding to F-actin. As to expression, expressed in epithelial tissues, specifically the pinacoderm (outer epithelium) and choanoderm (feeding epithelium) (at protein level). Also detected in migratory cells of the mesohyl (at protein level).

The protein resides in the cytoplasm. The protein localises to the cell cortex. It is found in the cell projection. Its subcellular location is the filopodium. It localises to the cytoskeleton. Functionally, actin filament (F-actin)-binding protein which may play a role in cell-cell adhesion. The protein is Vinculin of Oscarella pearsei (Sponge).